The primary structure comprises 353 residues: Ribosomal RNA small subunit methyltransferase C (353 aa).

The protein belongs to the methyltransferase superfamily. RsmC family. In terms of assembly, monomer.

It is found in the cytoplasm. The enzyme catalyses guanosine(1207) in 16S rRNA + S-adenosyl-L-methionine = N(2)-methylguanosine(1207) in 16S rRNA + S-adenosyl-L-homocysteine + H(+). In terms of biological role, specifically methylates the guanine in position 1207 of 16S rRNA in the 30S particle. This Marinomonas sp. (strain MWYL1) protein is Ribosomal RNA small subunit methyltransferase C.